The chain runs to 362 residues: Isopentenyl-diphosphate delta-isomerase (362 aa).

Residue 6 to 7 participates in substrate binding; sequence RK. Residues 65–67, serine 95, and asparagine 124 contribute to the FMN site; that span reads SIT. 95–97 is a substrate binding site; that stretch reads SQR. Glutamine 158 lines the substrate pocket. Position 159 (glutamate 159) interacts with Mg(2+). Residues lysine 189, threonine 219, 269–271, and 290–291 contribute to the FMN site; these read GVR and AL.

Belongs to the IPP isomerase type 2 family. As to quaternary structure, homooctamer. Dimer of tetramers. FMN serves as cofactor. The cofactor is NADPH. It depends on Mg(2+) as a cofactor.

Its subcellular location is the cytoplasm. It catalyses the reaction isopentenyl diphosphate = dimethylallyl diphosphate. Involved in the biosynthesis of isoprenoids. Catalyzes the 1,3-allylic rearrangement of the homoallylic substrate isopentenyl (IPP) to its allylic isomer, dimethylallyl diphosphate (DMAPP). The sequence is that of Isopentenyl-diphosphate delta-isomerase from Methanococcoides burtonii (strain DSM 6242 / NBRC 107633 / OCM 468 / ACE-M).